Here is a 775-residue protein sequence, read N- to C-terminus: MKVPYSWLSEFVELSDVSPEEIAEKLSLRSVEATVETFGIDLDGVVFGKVVEVKEHPTKKKLAVVKVQVQEHIFIDVVTVDKSVREGDGVIVALPNAKVGNMCVTEREFDGVVSKGLLLSAQELGLEEKSEGVLKIHEDFKPGTDANEILGFGEKIIEIDITPNRGDMLSVRGVARDLSAIFRLPKKKPEEPTYEETGEFFIEIEDEDCKRYRGVVIEGVEIKESPLYIKKRLWQCGIKSINNVVDITNYVMLRDGQPLHAFDLSKVEGGIIVRSAKKGEKIITLDGEERELDEDILVIADREKPLAVAGVIGGLESGIKENTKDILLESAYFNPFRVRKASKKLGIQTESSYRFERNVDIERVDRAQDYAVYLILKHAGGKVKVVKDVYREKYKPKKVFLPQGKYIRYAGESYKNEEVKEILDALEIPNEIMRCGVEVLVPSHRSFDIQRDVDLIEEIMRVKGYEHYTSETLKLPSIANLWKDNLLEVKKYLRDKGLTEVINFSFEDSKLYELLNLPLPELEVINPLNPTQRYMRNTLITSLLRTAVYNDRNYNYDQAVFELGKVFFKEGEENRLGILLKGNKPRTLKEEKWEPYDLTEIIAGIFALFGLEPEFRNAKRNFLHPYVQGEVYLEGEFVGFFGKLHPKIAKELELKGEPFVAEIEIERVLSKKRLPHYREVAKFPPVVRDIALVMDKELDVNKLLIDTKSQIGELLEEVRVFDVYTGEKVGEGKKSVAVRLVLRSKTGSLKDEEANELVNKLVNYLKEKYGVELRT.

Residues 39-147 (GIDLDGVVFG…EDFKPGTDAN (109 aa)) form the tRNA-binding domain. Residues 394–470 (YKPKKVFLPQ…RVKGYEHYTS (77 aa)) enclose the B5 domain. Mg(2+)-binding residues include Asp-448, Asp-454, Glu-457, and Glu-458. The 94-residue stretch at 681–774 (AKFPPVVRDI…LKEKYGVELR (94 aa)) folds into the FDX-ACB domain.

Belongs to the phenylalanyl-tRNA synthetase beta subunit family. Type 1 subfamily. As to quaternary structure, tetramer of two alpha and two beta subunits. Mg(2+) is required as a cofactor.

The protein resides in the cytoplasm. The enzyme catalyses tRNA(Phe) + L-phenylalanine + ATP = L-phenylalanyl-tRNA(Phe) + AMP + diphosphate + H(+). The protein is Phenylalanine--tRNA ligase beta subunit (pheT) of Aquifex aeolicus (strain VF5).